The primary structure comprises 262 residues: Imidazole glycerol phosphate synthase subunit HisF (262 aa).

Active-site residues include D11 and D130.

This sequence belongs to the HisA/HisF family. As to quaternary structure, heterodimer of HisH and HisF.

It is found in the cytoplasm. It catalyses the reaction 5-[(5-phospho-1-deoxy-D-ribulos-1-ylimino)methylamino]-1-(5-phospho-beta-D-ribosyl)imidazole-4-carboxamide + L-glutamine = D-erythro-1-(imidazol-4-yl)glycerol 3-phosphate + 5-amino-1-(5-phospho-beta-D-ribosyl)imidazole-4-carboxamide + L-glutamate + H(+). The protein operates within amino-acid biosynthesis; L-histidine biosynthesis; L-histidine from 5-phospho-alpha-D-ribose 1-diphosphate: step 5/9. Functionally, IGPS catalyzes the conversion of PRFAR and glutamine to IGP, AICAR and glutamate. The HisF subunit catalyzes the cyclization activity that produces IGP and AICAR from PRFAR using the ammonia provided by the HisH subunit. The sequence is that of Imidazole glycerol phosphate synthase subunit HisF from Rhodopirellula baltica (strain DSM 10527 / NCIMB 13988 / SH1).